The sequence spans 319 residues: Dehydrogenase/reductase SDR family member 9 (319 aa).

The first 17 residues, 1 to 17, serve as a signal peptide directing secretion; the sequence is MLFWVLGLLILCGFLWT. NAD(+) is bound by residues 34–58 and Asp83; that span reads ITGC…HVIA. Residue Ser164 participates in substrate binding. The Proton acceptor role is filled by Tyr176. NAD(+) is bound at residue Lys180.

It belongs to the short-chain dehydrogenases/reductases (SDR) family. In terms of assembly, homotetramer. In terms of tissue distribution, highly expressed in trachea and epidermis. Detected at lower levels in spinal cord, bone marrow, brain, tongue, esophagus, heart, colon, testis, placenta, lung, skeletal muscle and lymph node.

It is found in the microsome membrane. It localises to the endoplasmic reticulum membrane. It carries out the reaction 3beta-hydroxy-5alpha-pregnane-20-one + NAD(+) = 5alpha-pregnane-3,20-dione + NADH + H(+). It catalyses the reaction 17beta-hydroxy-5alpha-androstan-3-one + NAD(+) = 5alpha-androstan-3,17-dione + NADH + H(+). The enzyme catalyses androsterone + NAD(+) = 5alpha-androstan-3,17-dione + NADH + H(+). The catalysed reaction is 5alpha-androstane-3alpha,17beta-diol + NAD(+) = 17beta-hydroxy-5alpha-androstan-3-one + NADH + H(+). It carries out the reaction all-trans-retinol + NAD(+) = all-trans-retinal + NADH + H(+). It catalyses the reaction 3alpha-hydroxy-5alpha-pregnan-20-one + NAD(+) = 5alpha-pregnane-3,20-dione + NADH + H(+). Its function is as follows. 3-alpha-hydroxysteroid dehydrogenase that converts 3-alpha-tetrahydroprogesterone (allopregnanolone) to dihydroxyprogesterone and 3-alpha-androstanediol to dihydroxyprogesterone. Also plays a role in the biosynthesis of retinoic acid from retinaldehyde. Can utilize both NADH and NADPH. In Homo sapiens (Human), this protein is Dehydrogenase/reductase SDR family member 9 (DHRS9).